The following is a 413-amino-acid chain: MTATSLWELAERARKRLSEIAKGNRDRALLAMADLLEARWEEVLRANREDLEEAERTGLPKAKLDRLALKEKDLKTLTEGLRQIARLPDPLGRIEGLAKRPNGLRVGRMRVPLGLIGFIYEARPGATVEAVSVALKAGNAMLLRGGKEAFRSNRALVALWHEALGEAGLPEEAVTLVPTTDREAVLEMCRLELLDLLIPRGGEELIRLVQREARVPVLAHAKGVNHLYVDKKADLSMALRLALNGKTQRPAVCNALETVLVHEKVAEAFLPRLEKAMREKGVELRACPRALPLLKEAVPAREDEWDREYLDLVLRVKVVSGLEEALAHIARYGSRHTEAICTEDPKAAWRFLEEVDASLVLWNASTRFNDGFELGLGAEIGISTSKLHAYGPMGPMELTTLKWVALGEGQERT.

Belongs to the gamma-glutamyl phosphate reductase family.

The protein localises to the cytoplasm. The enzyme catalyses L-glutamate 5-semialdehyde + phosphate + NADP(+) = L-glutamyl 5-phosphate + NADPH + H(+). The protein operates within amino-acid biosynthesis; L-proline biosynthesis; L-glutamate 5-semialdehyde from L-glutamate: step 2/2. Catalyzes the NADPH-dependent reduction of L-glutamate 5-phosphate into L-glutamate 5-semialdehyde and phosphate. The product spontaneously undergoes cyclization to form 1-pyrroline-5-carboxylate. The polypeptide is Gamma-glutamyl phosphate reductase (Thermus thermophilus (strain ATCC 27634 / DSM 579 / HB8)).